A 163-amino-acid polypeptide reads, in one-letter code: Epididymal-specific lipocalin-6 (163 aa).

An N-terminal signal peptide occupies residues 1–20 (MGGLLLAAFLALVSVPRAQA).

The protein belongs to the calycin superfamily. Lipocalin family. As to expression, predominantly expressed in epididymis.

It is found in the secreted. In terms of biological role, may play a role in male fertility. This chain is Epididymal-specific lipocalin-6 (LCN6), found in Homo sapiens (Human).